The following is a 623-amino-acid chain: Protein vein (623 aa).

A signal peptide spans 1 to 40; it reads MYAQHLRKWSLKTKKQLMPLILLIISYMLLLNTCVLSSSA. 4 disordered regions span residues 70–98, 130–162, 184–214, and 229–317; these read IPLS…SSNN, DAGS…SMQK, AASS…NYSS, and PESM…QRYN. 2 stretches are compositionally biased toward low complexity: residues 72-98 and 136-158; these read LSSD…SSNN and PAQQ…QQQQ. The N-linked (GlcNAc...) asparagine glycan is linked to Asn-76. Asn-211 carries N-linked (GlcNAc...) asparagine glycosylation. Residues 233-248 show a composition bias toward basic and acidic residues; the sequence is LEDRSPEQAARSRRDG. Asn-252 is a glycosylation site (N-linked (GlcNAc...) asparagine). The span at 255 to 267 shows a compositional bias: low complexity; that stretch reads RQQQRTGHRQQLQ. Over residues 305 to 316 the composition is skewed to basic residues; the sequence is QRRKHQRKHQRY. 6 N-linked (GlcNAc...) asparagine glycosylation sites follow: Asn-350, Asn-381, Asn-424, Asn-449, Asn-521, and Asn-574. In terms of domain architecture, Ig-like C2-type spans 457 to 542; the sequence is TKIFSKPSKA…AKNKASKAIA (86 aa). 4 disulfide bridges follow: Cys-478-Cys-531, Cys-566-Cys-577, Cys-571-Cys-588, and Cys-590-Cys-599. An EGF-like domain is found at 561–599; the sequence is ASGIPCNFDYCFHNGTCRMIPDINEVYCRCPTEYFGNRC.

Its subcellular location is the secreted. Functionally, ligand for the EGF receptor. Seems to play a role in the global proliferation of wing disc cells and the larval patterning. Shows a strong synergistic genetic interaction with spi, suggesting a molecular interdependence. Required for the development of interveins cells. In Drosophila melanogaster (Fruit fly), this protein is Protein vein (vn).